The following is a 342-amino-acid chain: Galactose mutarotase (342 aa).

A Phosphoserine modification is found at Ser-14. Beta-D-galactose contacts are provided by residues 81-82 (NR) and His-107. Residue Ser-124 is modified to Phosphoserine. The active-site Proton donor is the His-176. Beta-D-galactose contacts are provided by residues 176–178 (HSY), Asp-243, Gln-279, and Glu-307. Residue Glu-307 is the Proton acceptor of the active site.

The protein belongs to the aldose epimerase family. As to quaternary structure, monomer.

Its subcellular location is the cytoplasm. It carries out the reaction alpha-D-galactose = beta-D-galactose. The catalysed reaction is alpha-D-glucose = beta-D-glucose. The protein operates within carbohydrate metabolism; hexose metabolism. Its pathway is carbohydrate metabolism; galactose metabolism. Its function is as follows. Mutarotase that catalyzes the interconversion of beta-D-galactose and alpha-D-galactose during galactose metabolism. Beta-D-galactose is metabolized in the liver into glucose 1-phosphate, the primary metabolic fuel, by the action of four enzymes that constitute the Leloir pathway: GALM, GALK1 (galactokinase), GALT (galactose-1-phosphate uridylyltransferase) and GALE (UDP-galactose-4'-epimerase). Involved in the maintenance of the equilibrium between the beta- and alpha-anomers of galactose, therefore ensuring a sufficient supply of the alpha-anomer for GALK1. Also active on D-glucose although shows a preference for galactose over glucose. This Sus scrofa (Pig) protein is Galactose mutarotase (GALM).